The sequence spans 419 residues: Serine hydroxymethyltransferase (419 aa).

(6S)-5,6,7,8-tetrahydrofolate is bound by residues leucine 121 and 125 to 127 (GHL). Lysine 229 bears the N6-(pyridoxal phosphate)lysine mark. Residue 354–356 (SPF) coordinates (6S)-5,6,7,8-tetrahydrofolate.

This sequence belongs to the SHMT family. In terms of assembly, homodimer. It depends on pyridoxal 5'-phosphate as a cofactor.

The protein resides in the cytoplasm. It carries out the reaction (6R)-5,10-methylene-5,6,7,8-tetrahydrofolate + glycine + H2O = (6S)-5,6,7,8-tetrahydrofolate + L-serine. It functions in the pathway one-carbon metabolism; tetrahydrofolate interconversion. The protein operates within amino-acid biosynthesis; glycine biosynthesis; glycine from L-serine: step 1/1. Its function is as follows. Catalyzes the reversible interconversion of serine and glycine with tetrahydrofolate (THF) serving as the one-carbon carrier. This reaction serves as the major source of one-carbon groups required for the biosynthesis of purines, thymidylate, methionine, and other important biomolecules. Also exhibits THF-independent aldolase activity toward beta-hydroxyamino acids, producing glycine and aldehydes, via a retro-aldol mechanism. This chain is Serine hydroxymethyltransferase, found in Coxiella burnetii (strain CbuK_Q154) (Coxiella burnetii (strain Q154)).